The sequence spans 122 residues: Ribosome-binding factor A (122 aa).

This sequence belongs to the RbfA family. Monomer. Binds 30S ribosomal subunits, but not 50S ribosomal subunits or 70S ribosomes.

It is found in the cytoplasm. Functionally, one of several proteins that assist in the late maturation steps of the functional core of the 30S ribosomal subunit. Associates with free 30S ribosomal subunits (but not with 30S subunits that are part of 70S ribosomes or polysomes). Required for efficient processing of 16S rRNA. May interact with the 5'-terminal helix region of 16S rRNA. The chain is Ribosome-binding factor A from Prosthecochloris aestuarii (strain DSM 271 / SK 413).